The sequence spans 190 residues: Crossover junction endodeoxyribonuclease RuvC (190 aa).

Catalysis depends on residues Asp7, Glu68, and Asp141. Mg(2+)-binding residues include Asp7, Glu68, and Asp141.

It belongs to the RuvC family. As to quaternary structure, homodimer which binds Holliday junction (HJ) DNA. The HJ becomes 2-fold symmetrical on binding to RuvC with unstacked arms; it has a different conformation from HJ DNA in complex with RuvA. In the full resolvosome a probable DNA-RuvA(4)-RuvB(12)-RuvC(2) complex forms which resolves the HJ. Mg(2+) serves as cofactor.

It is found in the cytoplasm. The catalysed reaction is Endonucleolytic cleavage at a junction such as a reciprocal single-stranded crossover between two homologous DNA duplexes (Holliday junction).. In terms of biological role, the RuvA-RuvB-RuvC complex processes Holliday junction (HJ) DNA during genetic recombination and DNA repair. Endonuclease that resolves HJ intermediates. Cleaves cruciform DNA by making single-stranded nicks across the HJ at symmetrical positions within the homologous arms, yielding a 5'-phosphate and a 3'-hydroxyl group; requires a central core of homology in the junction. The consensus cleavage sequence is 5'-(A/T)TT(C/G)-3'. Cleavage occurs on the 3'-side of the TT dinucleotide at the point of strand exchange. HJ branch migration catalyzed by RuvA-RuvB allows RuvC to scan DNA until it finds its consensus sequence, where it cleaves and resolves the cruciform DNA. This chain is Crossover junction endodeoxyribonuclease RuvC, found in Endomicrobium trichonymphae.